A 418-amino-acid polypeptide reads, in one-letter code: Serine--tRNA ligase (418 aa).

Residue 228–230 coordinates L-serine; it reads TSE. Residues 258–260 and V274 contribute to the ATP site; that span reads RKE. Residue E281 participates in L-serine binding. Residue 345–348 coordinates ATP; sequence EVVS. T381 lines the L-serine pocket.

This sequence belongs to the class-II aminoacyl-tRNA synthetase family. Type-1 seryl-tRNA synthetase subfamily. As to quaternary structure, homodimer. The tRNA molecule binds across the dimer.

The protein localises to the cytoplasm. The enzyme catalyses tRNA(Ser) + L-serine + ATP = L-seryl-tRNA(Ser) + AMP + diphosphate + H(+). It catalyses the reaction tRNA(Sec) + L-serine + ATP = L-seryl-tRNA(Sec) + AMP + diphosphate + H(+). The protein operates within aminoacyl-tRNA biosynthesis; selenocysteinyl-tRNA(Sec) biosynthesis; L-seryl-tRNA(Sec) from L-serine and tRNA(Sec): step 1/1. In terms of biological role, catalyzes the attachment of serine to tRNA(Ser). Is also able to aminoacylate tRNA(Sec) with serine, to form the misacylated tRNA L-seryl-tRNA(Sec), which will be further converted into selenocysteinyl-tRNA(Sec). The sequence is that of Serine--tRNA ligase from Cenarchaeum symbiosum (strain A).